The chain runs to 258 residues: Ubiquinone/menaquinone biosynthesis C-methyltransferase UbiE (258 aa).

Residues T81, D102, and 130-131 (NA) contribute to the S-adenosyl-L-methionine site.

Belongs to the class I-like SAM-binding methyltransferase superfamily. MenG/UbiE family.

The catalysed reaction is a 2-demethylmenaquinol + S-adenosyl-L-methionine = a menaquinol + S-adenosyl-L-homocysteine + H(+). It catalyses the reaction a 2-methoxy-6-(all-trans-polyprenyl)benzene-1,4-diol + S-adenosyl-L-methionine = a 5-methoxy-2-methyl-3-(all-trans-polyprenyl)benzene-1,4-diol + S-adenosyl-L-homocysteine + H(+). It functions in the pathway quinol/quinone metabolism; menaquinone biosynthesis; menaquinol from 1,4-dihydroxy-2-naphthoate: step 2/2. It participates in cofactor biosynthesis; ubiquinone biosynthesis. In terms of biological role, methyltransferase required for the conversion of demethylmenaquinol (DMKH2) to menaquinol (MKH2) and the conversion of 2-polyprenyl-6-methoxy-1,4-benzoquinol (DDMQH2) to 2-polyprenyl-3-methyl-6-methoxy-1,4-benzoquinol (DMQH2). The sequence is that of Ubiquinone/menaquinone biosynthesis C-methyltransferase UbiE from Allorhizobium ampelinum (strain ATCC BAA-846 / DSM 112012 / S4) (Agrobacterium vitis (strain S4)).